The primary structure comprises 281 residues: Glutamate racemase (281 aa).

Substrate is bound by residues 10 to 11 and 42 to 43; these read DS and YG. Residue Cys74 is the Proton donor/acceptor of the active site. 75-76 contributes to the substrate binding site; the sequence is NT. Cys190 (proton donor/acceptor) is an active-site residue. 191–192 lines the substrate pocket; it reads TH.

This sequence belongs to the aspartate/glutamate racemases family.

The catalysed reaction is L-glutamate = D-glutamate. Its pathway is cell wall biogenesis; peptidoglycan biosynthesis. Provides the (R)-glutamate required for cell wall biosynthesis. The polypeptide is Glutamate racemase (Oenococcus oeni (strain ATCC BAA-331 / PSU-1)).